The following is a 235-amino-acid chain: Elongation factor Tu, chloroplastic (235 aa).

The 125-residue stretch at 1–125 folds into the tr-type G domain; the sequence is KNMITGAAQM…AVDSYIPTPE (125 aa). 47–50 is a binding site for GTP; that stretch reads NKED.

Belongs to the TRAFAC class translation factor GTPase superfamily. Classic translation factor GTPase family. EF-Tu/EF-1A subfamily.

The protein localises to the plastid. It is found in the chloroplast. It catalyses the reaction GTP + H2O = GDP + phosphate + H(+). Functionally, GTP hydrolase that promotes the GTP-dependent binding of aminoacyl-tRNA to the A-site of ribosomes during protein biosynthesis. The protein is Elongation factor Tu, chloroplastic (tufA) of Mantoniella squamata (Unicellular alga).